A 232-amino-acid chain; its full sequence is Large ribosomal subunit protein uL1 (232 aa).

It belongs to the universal ribosomal protein uL1 family. In terms of assembly, part of the 50S ribosomal subunit.

Binds directly to 23S rRNA. The L1 stalk is quite mobile in the ribosome, and is involved in E site tRNA release. In terms of biological role, protein L1 is also a translational repressor protein, it controls the translation of the L11 operon by binding to its mRNA. The chain is Large ribosomal subunit protein uL1 from Burkholderia multivorans (strain ATCC 17616 / 249).